We begin with the raw amino-acid sequence, 258 residues long: Ribosomal RNA small subunit methyltransferase J (258 aa).

Residues Arg-106–Asp-107, Glu-122–Arg-123, and Asp-181 each bind S-adenosyl-L-methionine.

The protein belongs to the methyltransferase superfamily. RsmJ family.

It localises to the cytoplasm. It carries out the reaction guanosine(1516) in 16S rRNA + S-adenosyl-L-methionine = N(2)-methylguanosine(1516) in 16S rRNA + S-adenosyl-L-homocysteine + H(+). Functionally, specifically methylates the guanosine in position 1516 of 16S rRNA. The protein is Ribosomal RNA small subunit methyltransferase J of Pseudoalteromonas atlantica (strain T6c / ATCC BAA-1087).